The sequence spans 283 residues: 4-diphosphocytidyl-2-C-methyl-D-erythritol kinase (283 aa).

The active site involves lysine 10. 95–105 (PVAAGLGGGSS) provides a ligand contact to ATP. The active site involves aspartate 137.

Belongs to the GHMP kinase family. IspE subfamily.

It catalyses the reaction 4-CDP-2-C-methyl-D-erythritol + ATP = 4-CDP-2-C-methyl-D-erythritol 2-phosphate + ADP + H(+). Its pathway is isoprenoid biosynthesis; isopentenyl diphosphate biosynthesis via DXP pathway; isopentenyl diphosphate from 1-deoxy-D-xylulose 5-phosphate: step 3/6. In terms of biological role, catalyzes the phosphorylation of the position 2 hydroxy group of 4-diphosphocytidyl-2C-methyl-D-erythritol. The sequence is that of 4-diphosphocytidyl-2-C-methyl-D-erythritol kinase from Limosilactobacillus reuteri (strain DSM 20016) (Lactobacillus reuteri).